The following is a 334-amino-acid chain: MHDRLISGTEKPEDHFDRAIRPTSLADYIGQPVVREQMEIFIGAARGRGEALDHTLIFGPPGLGKTTLANIIAREMGGNLKSTSGPVLERAGDLAAMLTNLEEGDVLFIDEIHRLSPVIEEILYPAMEDYQLDIMIGEGPAARSIKLDLPPFTLVAATTRAGLLTSPLRDRFGIVQRLEFYSVEDLTHIVTRSANLMNVPMTSTGAAEVARRSRGTPRIANRLLRRVRDYAQVKGTGEVTHDMAQRALDMLNVDKDGLDTLDRRYLSMLLERFDGGPAGVEALAAAMAEDSGTLEDVIEPYLIQQGYVMRTARGRIATNMAYLQFGLTPPEPKN.

The tract at residues 1–181 (MHDRLISGTE…FGIVQRLEFY (181 aa)) is large ATPase domain (RuvB-L). Residues Ile-20, Arg-21, Gly-62, Lys-65, Thr-66, Thr-67, 128–130 (EDY), Arg-171, Tyr-181, and Arg-218 each bind ATP. Position 66 (Thr-66) interacts with Mg(2+). A small ATPAse domain (RuvB-S) region spans residues 182-252 (SVEDLTHIVT…MAQRALDMLN (71 aa)). A head domain (RuvB-H) region spans residues 255 to 334 (KDGLDTLDRR…FGLTPPEPKN (80 aa)). Residues Arg-310 and Arg-315 each contribute to the DNA site.

This sequence belongs to the RuvB family. In terms of assembly, homohexamer. Forms an RuvA(8)-RuvB(12)-Holliday junction (HJ) complex. HJ DNA is sandwiched between 2 RuvA tetramers; dsDNA enters through RuvA and exits via RuvB. An RuvB hexamer assembles on each DNA strand where it exits the tetramer. Each RuvB hexamer is contacted by two RuvA subunits (via domain III) on 2 adjacent RuvB subunits; this complex drives branch migration. In the full resolvosome a probable DNA-RuvA(4)-RuvB(12)-RuvC(2) complex forms which resolves the HJ.

Its subcellular location is the cytoplasm. It carries out the reaction ATP + H2O = ADP + phosphate + H(+). In terms of biological role, the RuvA-RuvB-RuvC complex processes Holliday junction (HJ) DNA during genetic recombination and DNA repair, while the RuvA-RuvB complex plays an important role in the rescue of blocked DNA replication forks via replication fork reversal (RFR). RuvA specifically binds to HJ cruciform DNA, conferring on it an open structure. The RuvB hexamer acts as an ATP-dependent pump, pulling dsDNA into and through the RuvAB complex. RuvB forms 2 homohexamers on either side of HJ DNA bound by 1 or 2 RuvA tetramers; 4 subunits per hexamer contact DNA at a time. Coordinated motions by a converter formed by DNA-disengaged RuvB subunits stimulates ATP hydrolysis and nucleotide exchange. Immobilization of the converter enables RuvB to convert the ATP-contained energy into a lever motion, pulling 2 nucleotides of DNA out of the RuvA tetramer per ATP hydrolyzed, thus driving DNA branch migration. The RuvB motors rotate together with the DNA substrate, which together with the progressing nucleotide cycle form the mechanistic basis for DNA recombination by continuous HJ branch migration. Branch migration allows RuvC to scan DNA until it finds its consensus sequence, where it cleaves and resolves cruciform DNA. The protein is Holliday junction branch migration complex subunit RuvB of Acinetobacter baylyi (strain ATCC 33305 / BD413 / ADP1).